The sequence spans 422 residues: Anhydromevalonate phosphate decarboxylase (422 aa).

Asparagine 134 and glutamate 197 together coordinate Mn(2+). Residue aspartate 244 is the Proton acceptor of the active site.

It belongs to the UbiD family. Prenylated FMN is required as a cofactor. Requires Mn(2+) as cofactor.

The enzyme catalyses (2E)-3-methyl-5-phosphooxypent-2-enoate + H(+) = isopentenyl phosphate + CO2. It functions in the pathway isoprenoid biosynthesis; isopentenyl diphosphate biosynthesis via mevalonate pathway. Its function is as follows. Catalyzes the conversion of trans-anhydromevalonate 5-phosphate (tAHMP) into isopentenyl phosphate. Involved in the archaeal mevalonate (MVA) pathway, which provides fundamental precursors for isoprenoid biosynthesis, such as isopentenyl diphosphate (IPP) and dimethylallyl diphosphate (DMAPP). The protein is Anhydromevalonate phosphate decarboxylase of Methanosarcina mazei (strain ATCC BAA-159 / DSM 3647 / Goe1 / Go1 / JCM 11833 / OCM 88) (Methanosarcina frisia).